Here is a 116-residue protein sequence, read N- to C-terminus: Iron-sulfur cluster assembly protein CyaY (116 aa).

The protein belongs to the frataxin family.

Functionally, involved in iron-sulfur (Fe-S) cluster assembly. May act as a regulator of Fe-S biogenesis. The chain is Iron-sulfur cluster assembly protein CyaY from Buchnera aphidicola subsp. Acyrthosiphon pisum (strain APS) (Acyrthosiphon pisum symbiotic bacterium).